Reading from the N-terminus, the 1363-residue chain is DNA-directed RNA polymerase subunit beta (1363 aa).

The protein belongs to the RNA polymerase beta chain family. The RNAP catalytic core consists of 2 alpha, 1 beta, 1 beta' and 1 omega subunit. When a sigma factor is associated with the core the holoenzyme is formed, which can initiate transcription.

The enzyme catalyses RNA(n) + a ribonucleoside 5'-triphosphate = RNA(n+1) + diphosphate. Functionally, DNA-dependent RNA polymerase catalyzes the transcription of DNA into RNA using the four ribonucleoside triphosphates as substrates. This chain is DNA-directed RNA polymerase subunit beta, found in Pelagibacter ubique (strain HTCC1062).